The primary structure comprises 389 residues: Monomeric sarcosine oxidase (389 aa).

An FAD-binding site is contributed by 8 to 38; it reads DVIVVGAGSMGMAAGYYLSKQGVKTLLVDSF. S-8alpha-FAD cysteine is present on cysteine 318.

The protein belongs to the MSOX/MTOX family. MSOX subfamily. As to quaternary structure, monomer. The cofactor is FAD.

It is found in the cytoplasm. The enzyme catalyses sarcosine + O2 + H2O = formaldehyde + glycine + H2O2. In terms of biological role, catalyzes the oxidative demethylation of sarcosine. The chain is Monomeric sarcosine oxidase (soxA) from Arthrobacter sp. (strain TE1826).